The following is a 360-amino-acid chain: MKPHALIGLLAGMLLSSSLYAADSTKPLPLHIGGRVLVESPANQPVSYTYSWPAVYFETAFKGQSLTLKFDDDQNIFRLIVDDKAPVVINKPGKVDYPVESLAPGKHRVRLEKLTETQSTSGRFLGFYTDPSAKPLALPKRKRQIEFIGDSFTVGYGNTSPSRECTDEELFKTTNSQMAFGPLTAKAFDADYQINASSGFGIVRNYNGTSPDKSLLSLYPYTLNNPDQLYHNKHWKPQVIVIGLGTNDFSTALNDNERWKTREALHADYVANYVKFVKQLHSNNARAQFILMNSDQSNGEIAEQVGKVVAQLKGGGLHQVEQIVFKGLDYSGCHWHPSANDDQLLANLLITHLQQKKGIW.

Positions 1-21 (MKPHALIGLLAGMLLSSSLYA) are cleaved as a signal peptide. Ser151 (nucleophile) is an active-site residue.

The protein belongs to the carbohydrate esterase 2 (CE2) family.

Its subcellular location is the secreted. It catalyses the reaction Deacetylation of xylans and xylo-oligosaccharides.. The protein operates within glycan degradation; xylan degradation. Its function is as follows. Involved in the degradation of plant cell wall polysaccharides. Catalyzes the deacetylation of acetylated birchwood xylan and glucomannan, with a large preference for the latter, and of the synthetic substrate 4-nitrophenyl acetate (4-NPAc). The chain is Acetylxylan esterase / glucomannan deacetylase from Cellvibrio japonicus (strain Ueda107) (Pseudomonas fluorescens subsp. cellulosa).